A 135-amino-acid chain; its full sequence is Large ribosomal subunit protein eL32 (135 aa).

The protein belongs to the eukaryotic ribosomal protein eL32 family.

This Methanococcus maripaludis (strain C5 / ATCC BAA-1333) protein is Large ribosomal subunit protein eL32.